The chain runs to 581 residues: Chaotic nuclear migration protein 67 (581 aa).

Residues Ser-17, Ser-20, Ser-72, Ser-85, and Ser-89 each carry the phosphoserine modification. The disordered stretch occupies residues 86 to 150; that stretch reads YQESPGLQER…PTDEHTSPDI (65 aa). Basic and acidic residues predominate over residues 94-114; sequence ERPKNEKDKSPIGTDVHKKDV. Ser-151 is modified (phosphoserine). Coiled coils occupy residues 179 to 252, 306 to 363, and 373 to 451; these read LGYQ…DTIQ, FLCA…LSKQ, and KLTI…NTSE.

As to quaternary structure, interacts directly with ADY3 and YOR129C. Interacts with ADY4. Probable component of a SPB complex composed of ADY3, SSP1, DON1, MPC54, SPO21/MPC70, NUD1 and CNM67. In terms of processing, phosphorylated in its N-terminal part.

Its subcellular location is the cytoplasm. It localises to the cytoskeleton. The protein localises to the microtubule organizing center. It is found in the spindle pole body. Involved in the pathway that organizes the shaping and sizing of the prospore membrane (PSM) during sporulation. Required for the proper formation of the spindle pole body (SPB) outer plaque. May connect the outer plaque to the central plaque embedded in the nuclear envelope. This chain is Chaotic nuclear migration protein 67 (CNM67), found in Saccharomyces cerevisiae (strain ATCC 204508 / S288c) (Baker's yeast).